The primary structure comprises 216 residues: Probable GTP-binding protein EngB (216 aa).

An EngB-type G domain is found at 27 to 201 (EGIEVAFAGR…REKLDTWFSE (175 aa)). GTP is bound by residues 35 to 42 (GRSNAGKS), 62 to 66 (GRTQL), 80 to 83 (DLPG), 147 to 150 (TKAD), and 180 to 182 (FSS). Mg(2+)-binding residues include Ser-42 and Thr-64.

Belongs to the TRAFAC class TrmE-Era-EngA-EngB-Septin-like GTPase superfamily. EngB GTPase family. Mg(2+) serves as cofactor.

Functionally, necessary for normal cell division and for the maintenance of normal septation. The sequence is that of Probable GTP-binding protein EngB from Yersinia pseudotuberculosis serotype O:1b (strain IP 31758).